The sequence spans 368 residues: D-alanine--D-alanine ligase (368 aa).

The 208-residue stretch at 151–358 folds into the ATP-grasp domain; it reads KKLLAAEGLP…YRTLISTLVD (208 aa). An ATP-binding site is contributed by 179-234; the sequence is KAELGLPVFVKPARGGSSIGITRVSNWDGLDGAIAHARLHDPKVIVEGAIIGREVE. 3 residues coordinate Mg(2+): aspartate 313, glutamate 325, and asparagine 327.

This sequence belongs to the D-alanine--D-alanine ligase family. The cofactor is Mg(2+). Mn(2+) serves as cofactor.

Its subcellular location is the cytoplasm. It carries out the reaction 2 D-alanine + ATP = D-alanyl-D-alanine + ADP + phosphate + H(+). The protein operates within cell wall biogenesis; peptidoglycan biosynthesis. Cell wall formation. In Rhodococcus erythropolis (strain PR4 / NBRC 100887), this protein is D-alanine--D-alanine ligase.